The following is a 405-amino-acid chain: Tryptophan synthase beta chain (405 aa).

Residue Lys98 is modified to N6-(pyridoxal phosphate)lysine.

It belongs to the TrpB family. Tetramer of two alpha and two beta chains. Pyridoxal 5'-phosphate serves as cofactor.

It catalyses the reaction (1S,2R)-1-C-(indol-3-yl)glycerol 3-phosphate + L-serine = D-glyceraldehyde 3-phosphate + L-tryptophan + H2O. It functions in the pathway amino-acid biosynthesis; L-tryptophan biosynthesis; L-tryptophan from chorismate: step 5/5. The beta subunit is responsible for the synthesis of L-tryptophan from indole and L-serine. The protein is Tryptophan synthase beta chain of Stenotrophomonas maltophilia (strain K279a).